Reading from the N-terminus, the 664-residue chain is UvrABC system protein B (664 aa).

The Helicase ATP-binding domain maps to K25 to P412. An ATP-binding site is contributed by G38 to T45. A Beta-hairpin motif is present at residues Y91–I114. The Helicase C-terminal domain maps to Q428–N594. The UVR domain occupies A620–A655.

The protein belongs to the UvrB family. In terms of assembly, forms a heterotetramer with UvrA during the search for lesions. Interacts with UvrC in an incision complex.

The protein localises to the cytoplasm. Its function is as follows. The UvrABC repair system catalyzes the recognition and processing of DNA lesions. A damage recognition complex composed of 2 UvrA and 2 UvrB subunits scans DNA for abnormalities. Upon binding of the UvrA(2)B(2) complex to a putative damaged site, the DNA wraps around one UvrB monomer. DNA wrap is dependent on ATP binding by UvrB and probably causes local melting of the DNA helix, facilitating insertion of UvrB beta-hairpin between the DNA strands. Then UvrB probes one DNA strand for the presence of a lesion. If a lesion is found the UvrA subunits dissociate and the UvrB-DNA preincision complex is formed. This complex is subsequently bound by UvrC and the second UvrB is released. If no lesion is found, the DNA wraps around the other UvrB subunit that will check the other stand for damage. The polypeptide is UvrABC system protein B (Dehalococcoides mccartyi (strain CBDB1)).